A 120-amino-acid chain; its full sequence is UPF0102 protein HSM_1206 (120 aa).

This sequence belongs to the UPF0102 family.

This is UPF0102 protein HSM_1206 from Histophilus somni (strain 2336) (Haemophilus somnus).